A 369-amino-acid chain; its full sequence is Transposase for insertion sequence element IS1201 (369 aa).

It belongs to the transposase mutator family.

In terms of biological role, required for the transposition of the insertion element. The protein is Transposase for insertion sequence element IS1201 of Lactobacillus helveticus (Lactobacillus suntoryeus).